A 339-amino-acid chain; its full sequence is D-erythrose-4-phosphate dehydrogenase (339 aa).

Residues 12–13 (RI) and Arg81 each bind NAD(+). Residues 154–156 (SCT), Arg200, 213–214 (TK), and Arg236 each bind substrate. The active-site Nucleophile is the Cys155. Asn318 contacts NAD(+).

Belongs to the glyceraldehyde-3-phosphate dehydrogenase family. Epd subfamily. Homotetramer.

Its subcellular location is the cytoplasm. The enzyme catalyses D-erythrose 4-phosphate + NAD(+) + H2O = 4-phospho-D-erythronate + NADH + 2 H(+). Its pathway is cofactor biosynthesis; pyridoxine 5'-phosphate biosynthesis; pyridoxine 5'-phosphate from D-erythrose 4-phosphate: step 1/5. Its function is as follows. Catalyzes the NAD-dependent conversion of D-erythrose 4-phosphate to 4-phosphoerythronate. The sequence is that of D-erythrose-4-phosphate dehydrogenase from Shigella dysenteriae serotype 1 (strain Sd197).